A 241-amino-acid chain; its full sequence is Histidine-rich protein PFHRP-III (241 aa).

Residues 1 to 21 (MVSFSKNKVLSAAVFASVLLL) form the signal peptide. The segment covering 52–76 (AHAGDAHHAHHVADAHHAHHVADAH) has biased composition (basic and acidic residues). Disordered regions lie at residues 52-145 (AHAG…ANAH) and 195-241 (AHHD…HLHH). Residues 84-145 (AHHAANAHHA…ANAHHAANAH (62 aa)) are compositionally biased toward low complexity. Residues 195 to 231 (AHHDGAHHDDAHHDGAHHDDAHHDGAHHDGAHHDGAH) show a composition bias toward basic and acidic residues.

In Plasmodium falciparum, this protein is Histidine-rich protein PFHRP-III.